The sequence spans 374 residues: Dihydrolipoyllysine-residue acetyltransferase component of acetoin cleaving system (374 aa).

Residues 9–84 (IIPIVMPKWG…PVKALLGVLA (76 aa)) enclose the Lipoyl-binding domain. An N6-lipoyllysine modification is found at lysine 50. Positions 137–360 (TVLFIHGFGG…DAGHMSQMEK (224 aa)) constitute an AB hydrolase-1 domain.

(R)-lipoate serves as cofactor.

It catalyses the reaction N(6)-[(R)-dihydrolipoyl]-L-lysyl-[protein] + acetyl-CoA = N(6)-[(R)-S(8)-acetyldihydrolipoyl]-L-lysyl-[protein] + CoA. It functions in the pathway ketone degradation; acetoin degradation. In terms of biological role, dihydrolipoamide acetyltransferase involved in acetoin catabolism. The polypeptide is Dihydrolipoyllysine-residue acetyltransferase component of acetoin cleaving system (acoC) (Cupriavidus necator (strain ATCC 17699 / DSM 428 / KCTC 22496 / NCIMB 10442 / H16 / Stanier 337) (Ralstonia eutropha)).